Consider the following 213-residue polypeptide: Redox-sensing transcriptional repressor Rex (213 aa).

The H-T-H motif DNA-binding region spans 18–57 (LYYRFLKNLHASGKQRVSSAELSEAVKVDPATIRRDFSYF). 92-97 (GVGNLG) contributes to the NAD(+) binding site.

Belongs to the transcriptional regulatory Rex family. As to quaternary structure, homodimer.

It is found in the cytoplasm. Modulates transcription in response to changes in cellular NADH/NAD(+) redox state. The protein is Redox-sensing transcriptional repressor Rex of Geobacillus kaustophilus (strain HTA426).